Reading from the N-terminus, the 419-residue chain is UDP-N-acetylglucosamine 1-carboxyvinyltransferase (419 aa).

22–23 (KN) is a phosphoenolpyruvate binding site. R95 is a binding site for UDP-N-acetyl-alpha-D-glucosamine. The active-site Proton donor is C119. Position 119 is a 2-(S-cysteinyl)pyruvic acid O-phosphothioketal (C119). Residues 164-167 (KVSV), D308, and I330 contribute to the UDP-N-acetyl-alpha-D-glucosamine site.

It belongs to the EPSP synthase family. MurA subfamily.

It is found in the cytoplasm. The enzyme catalyses phosphoenolpyruvate + UDP-N-acetyl-alpha-D-glucosamine = UDP-N-acetyl-3-O-(1-carboxyvinyl)-alpha-D-glucosamine + phosphate. It participates in cell wall biogenesis; peptidoglycan biosynthesis. In terms of biological role, cell wall formation. Adds enolpyruvyl to UDP-N-acetylglucosamine. This is UDP-N-acetylglucosamine 1-carboxyvinyltransferase from Rickettsia canadensis (strain McKiel).